Consider the following 227-residue polypeptide: Peptidyl-tRNA hydrolase (227 aa).

Tyrosine 14 provides a ligand contact to tRNA. The active-site Proton acceptor is histidine 19. 3 residues coordinate tRNA: phenylalanine 64, asparagine 66, and asparagine 112. Positions 182-227 (RIALLTQPPKPPKPPKPPKDGAKETAGKGTEAETAKPPGPAAGRTG) are disordered. The span at 198-215 (PPKDGAKETAGKGTEAET) shows a compositional bias: basic and acidic residues.

It belongs to the PTH family. In terms of assembly, monomer.

It localises to the cytoplasm. The catalysed reaction is an N-acyl-L-alpha-aminoacyl-tRNA + H2O = an N-acyl-L-amino acid + a tRNA + H(+). Functionally, hydrolyzes ribosome-free peptidyl-tRNAs (with 1 or more amino acids incorporated), which drop off the ribosome during protein synthesis, or as a result of ribosome stalling. In terms of biological role, catalyzes the release of premature peptidyl moieties from peptidyl-tRNA molecules trapped in stalled 50S ribosomal subunits, and thus maintains levels of free tRNAs and 50S ribosomes. This Rhodospirillum centenum (strain ATCC 51521 / SW) protein is Peptidyl-tRNA hydrolase.